Consider the following 258-residue polypeptide: Sec-independent protein translocase protein TatC (258 aa).

The Cytoplasmic portion of the chain corresponds to 2–23 (SVEDTQPLITHLIELRKRLLNC). A helical transmembrane segment spans residues 24–44 (IIAVIVIFLCLVYFANDIYHL). The Periplasmic segment spans residues 45–75 (VSAPLIKQLPQGSTMIATDVASPFFTPIKLT). The chain crosses the membrane as a helical span at residues 76 to 96 (FMVSLILSAPVILYQVWAFIA). The Cytoplasmic segment spans residues 97 to 115 (PALYKHERRLVVPLLVSSS). A helical transmembrane segment spans residues 116–136 (LLFYIGMAFAYFVVFPLAFGF). Topologically, residues 137–156 (LANTAPEGVQVSTDIASYLS) are periplasmic. The helical transmembrane segment at 157–177 (FVMALFMAFGVSFEVPVAIVL) threads the bilayer. Residues 178 to 192 (LCWMGITSPEDLRKK) are Cytoplasmic-facing. A helical transmembrane segment spans residues 193-210 (RPYVLVGAFVVGMLLTPP). Residue Asp211 is a topological domain, periplasmic. Residues 212–232 (VFSQTLLAIPMYCLFEIGVFF) form a helical membrane-spanning segment. Residues 233–258 (SRFYVGKGRNREEENDAEAESEKTEE) lie on the Cytoplasmic side of the membrane.

It belongs to the TatC family. In terms of assembly, the Tat system comprises two distinct complexes: a TatABC complex, containing multiple copies of TatA, TatB and TatC subunits, and a separate TatA complex, containing only TatA subunits. Substrates initially bind to the TatABC complex, which probably triggers association of the separate TatA complex to form the active translocon. TatC can form a distinct, stable, multimeric complex independent of TatA and TatB. Each of TatA, TatB and TatC are able to interact in pairs without the third partner. Interacts with the signal sequence of DmsA and DmsD.

It is found in the cell inner membrane. Part of the twin-arginine translocation (Tat) system that transports large folded proteins containing a characteristic twin-arginine motif in their signal peptide across membranes. Together with TatB, TatC is part of a receptor directly interacting with Tat signal peptides. In Escherichia coli (strain K12), this protein is Sec-independent protein translocase protein TatC.